Consider the following 191-residue polypeptide: ATP synthase subunit b (191 aa).

The chain crosses the membrane as a helical span at residues 10-30; it reads FLVPGPTAIAELIVFLLILFI. Residues 170 to 191 form a disordered region; it reads RAQRQPAASDVVGGQQREEVHR.

The protein belongs to the ATPase B chain family. In terms of assembly, F-type ATPases have 2 components, F(1) - the catalytic core - and F(0) - the membrane proton channel. F(1) has five subunits: alpha(3), beta(3), gamma(1), delta(1), epsilon(1). F(0) has three main subunits: a(1), b(2) and c(10-14). The alpha and beta chains form an alternating ring which encloses part of the gamma chain. F(1) is attached to F(0) by a central stalk formed by the gamma and epsilon chains, while a peripheral stalk is formed by the delta and b chains.

It is found in the cell membrane. In terms of biological role, f(1)F(0) ATP synthase produces ATP from ADP in the presence of a proton or sodium gradient. F-type ATPases consist of two structural domains, F(1) containing the extramembraneous catalytic core and F(0) containing the membrane proton channel, linked together by a central stalk and a peripheral stalk. During catalysis, ATP synthesis in the catalytic domain of F(1) is coupled via a rotary mechanism of the central stalk subunits to proton translocation. Component of the F(0) channel, it forms part of the peripheral stalk, linking F(1) to F(0). The chain is ATP synthase subunit b from Acidothermus cellulolyticus (strain ATCC 43068 / DSM 8971 / 11B).